We begin with the raw amino-acid sequence, 118 residues long: Cell division protein FtsB (118 aa).

The Cytoplasmic segment spans residues 1–6 (MRNWRW). A helical transmembrane segment spans residues 7–24 (LLLVLAALLAWLQHRFWF). Residues 25-118 (GPGNSGEVRM…DLSQPRREKR (94 aa)) lie on the Periplasmic side of the membrane. A coiled-coil region spans residues 30 to 66 (GEVRMLQVQIVQQHQENERLRQRNASLAAEVKNLKDG). The disordered stretch occupies residues 98-118 (LPNDTSADHGVDLSQPRREKR). Residues 103–118 (SADHGVDLSQPRREKR) show a composition bias toward basic and acidic residues.

The protein belongs to the FtsB family. As to quaternary structure, part of a complex composed of FtsB, FtsL and FtsQ.

The protein localises to the cell inner membrane. Its function is as follows. Essential cell division protein. May link together the upstream cell division proteins, which are predominantly cytoplasmic, with the downstream cell division proteins, which are predominantly periplasmic. The polypeptide is Cell division protein FtsB (Xylella fastidiosa (strain M12)).